A 338-amino-acid chain; its full sequence is Lipoate-protein ligase A (338 aa).

In terms of domain architecture, BPL/LPL catalytic spans 29–216 (PATQRVLFLW…AFFAHYGERI (188 aa)). ATP contacts are provided by residues Arg71, 76–79 (GAVF), and Lys134. Residue Lys134 participates in (R)-lipoate binding.

Belongs to the LplA family. In terms of assembly, monomer.

Its subcellular location is the cytoplasm. The catalysed reaction is L-lysyl-[lipoyl-carrier protein] + (R)-lipoate + ATP = N(6)-[(R)-lipoyl]-L-lysyl-[lipoyl-carrier protein] + AMP + diphosphate + H(+). It participates in protein modification; protein lipoylation via exogenous pathway; protein N(6)-(lipoyl)lysine from lipoate: step 1/2. It functions in the pathway protein modification; protein lipoylation via exogenous pathway; protein N(6)-(lipoyl)lysine from lipoate: step 2/2. Catalyzes both the ATP-dependent activation of exogenously supplied lipoate to lipoyl-AMP and the transfer of the activated lipoyl onto the lipoyl domains of lipoate-dependent enzymes. This Salmonella paratyphi A (strain ATCC 9150 / SARB42) protein is Lipoate-protein ligase A.